The sequence spans 700 residues: Phenoloxidase 8 (700 aa).

The propeptide occupies 1–51 (MATLTQKFHGLLQHPLEPLFLPKNDGTLFYDLPERFLTSRYSPIGQNLANR). Residues Asn64 and Asn198 are each glycosylated (N-linked (GlcNAc...) asparagine). The Cu cation site is built by His223, His227, and His252. Asn295 carries an N-linked (GlcNAc...) asparagine glycan. Glu364 (proton acceptor) is an active-site residue. Cu cation is bound by residues His379, His383, and His419. N-linked (GlcNAc...) asparagine glycans are attached at residues Asn445, Asn507, and Asn565. 2 cysteine pairs are disulfide-bonded: Cys592–Cys636 and Cys594–Cys643.

It belongs to the tyrosinase family. Homodimer. Requires Cu(2+) as cofactor. In terms of processing, upon activation, a trypsin type protease cleaves prophenol oxidase to yield the active enzyme.

Its subcellular location is the secreted. It carries out the reaction 2 tyramine + O2 = 2 dopamine. It catalyses the reaction 2 dopamine + O2 = 2 dopamine quinone + 2 H2O. This is a copper-containing oxidase that functions in the formation of pigments such as melanins and other polyphenolic compounds. Catalyzes the oxidation of o-diphenols such as dopamine. Also oxidizes monophenols such as tyramine. The sequence is that of Phenoloxidase 8 from Anopheles gambiae (African malaria mosquito).